The primary structure comprises 134 residues: UPF0412 protein YaaI (134 aa).

The signal sequence occupies residues 1–23 (MKSVITISASLAISLMLCCTAQA).

It belongs to the UPF0412 family.

In Escherichia coli (strain UTI89 / UPEC), this protein is UPF0412 protein YaaI.